The following is a 470-amino-acid chain: MATTRVYLHTLGCPKNRVDSEVMLGTLTGAGYRLERDPAQADVIVVNTCGFIESAKEESVDAIVELAGMKQEGRCKKLVVTGCLVQRHAEELSAELPEVDHFLGTGAYAEIARVVSDAQAKRLVVPDPDFVHSAATPRVNSLPSHTAYLKISEGCDNACAFCIIPKLRGAQRSRPVDDVVAEAAALAAQGTVELSLVAQDLTAYGYDLPGKVRLHHLLPELCKVDGIRWLRLHYAYPRDVPDALVEVIAREPKIVKYLDMPLQHSSDRLLRSMKRGRDSVFLRELLARLRARVPGIALRTSLIVGLPGETEEDFEDLVRFVEEQRFERLGVFEFSPEDGTPAADMAEQVPDVVKRARRDRIMALQQEISREHQRAMVGRRLEVLVEGRAEETEHLLAGRHAQQAPEIDGITYVNDGVAYPGELVTVEITDASEYDLVGHVVARDPERARRPLPAPAGGETPRRGGLPVVG.

The MTTase N-terminal domain maps to 4–120 (TRVYLHTLGC…IARVVSDAQA (117 aa)). C13, C49, C83, C155, C159, and C162 together coordinate [4Fe-4S] cluster. One can recognise a Radical SAM core domain in the interval 141–371 (SLPSHTAYLK…MALQQEISRE (231 aa)). The TRAM domain maps to 374–442 (RAMVGRRLEV…EYDLVGHVVA (69 aa)). The disordered stretch occupies residues 447 to 470 (RARRPLPAPAGGETPRRGGLPVVG).

It belongs to the methylthiotransferase family. RimO subfamily. It depends on [4Fe-4S] cluster as a cofactor.

The protein resides in the cytoplasm. The catalysed reaction is L-aspartate(89)-[ribosomal protein uS12]-hydrogen + (sulfur carrier)-SH + AH2 + 2 S-adenosyl-L-methionine = 3-methylsulfanyl-L-aspartate(89)-[ribosomal protein uS12]-hydrogen + (sulfur carrier)-H + 5'-deoxyadenosine + L-methionine + A + S-adenosyl-L-homocysteine + 2 H(+). Catalyzes the methylthiolation of an aspartic acid residue of ribosomal protein uS12. The chain is Ribosomal protein uS12 methylthiotransferase RimO from Anaeromyxobacter sp. (strain Fw109-5).